Here is an 888-residue protein sequence, read N- to C-terminus: Alanine--tRNA ligase (888 aa).

4 residues coordinate Zn(2+): H571, H575, C674, and H678.

The protein belongs to the class-II aminoacyl-tRNA synthetase family. The cofactor is Zn(2+).

The protein localises to the cytoplasm. The catalysed reaction is tRNA(Ala) + L-alanine + ATP = L-alanyl-tRNA(Ala) + AMP + diphosphate. In terms of biological role, catalyzes the attachment of alanine to tRNA(Ala) in a two-step reaction: alanine is first activated by ATP to form Ala-AMP and then transferred to the acceptor end of tRNA(Ala). Also edits incorrectly charged Ser-tRNA(Ala) and Gly-tRNA(Ala) via its editing domain. The polypeptide is Alanine--tRNA ligase (Nocardia farcinica (strain IFM 10152)).